The sequence spans 364 residues: Poly(3-hydroxyalkanoate) polymerase subunit PhaE (364 aa).

Positions 322–364 are disordered; it reads SGKTPTTALKAPAPATKATEKPATRATTRRKTAAKPTGGTADD. Residues 324 to 338 are compositionally biased toward low complexity; it reads KTPTTALKAPAPATK.

The protein belongs to the PHA/PHB synthase family. Type III PhaE subfamily. Forms a heterodimer with PhaC, which may multimerize in the presence of 3-hydroxybutyryl-CoA.

It is found in the cytoplasm. Its pathway is biopolymer metabolism; poly-(R)-3-hydroxybutanoate biosynthesis. Polymerizes D(-)-3-hydroxybutyryl-CoA to create polyhydroxybutyrate (PHB) which consists of thousands of hydroxybutyrate molecules linked end to end. This subunit has no catalytic activity but enhances the activity of PhaC, the catalytic subunit. The chain is Poly(3-hydroxyalkanoate) polymerase subunit PhaE from Thiocystis violacea.